Reading from the N-terminus, the 251-residue chain is Fibroblast growth factor 23 (251 aa).

An N-terminal signal peptide occupies residues 1-24; sequence MLGTCLRLLVGVLCTVCSLGTARA. The cysteines at positions 95 and 113 are disulfide-linked. O-linked (GalNAc) threonine glycosylation is found at Thr-171 and Thr-178. Residues 175–251 form a disordered region; the sequence is RRHTRSAEDP…DRCRPFPRFV (77 aa). Residues 179 to 189 show a composition bias toward basic and acidic residues; the sequence is RSAEDPPERDP. Ser-180 carries the post-translational modification Phosphoserine; by FAM20C.

The protein belongs to the heparin-binding growth factors family. As to quaternary structure, interacts with FGFR1. Interacts with FGFR2, FGFR3 and FGFR4. Affinity between fibroblast growth factors (FGFs) and their receptors is increased by KL and heparan sulfate glycosaminoglycans that function as coreceptors. Post-translationally, following secretion this protein is inactivated by cleavage into a N-terminal fragment and a C-terminal fragment. The processing is effected by proprotein convertases. In terms of processing, O-glycosylated at Thr-171 and Thr-178 by GALNT3 and glycosylation of Thr-178 requires previous glycosylation at Thr171. Glycosylation is necessary for secretion; it blocks processing by proprotein convertases when the O-glycan is alpha 2,6-sialylated. Competition between proprotein convertase cleavage and block of cleavage by O-glycosylation determines the level of secreted active FGF23. Phosphorylation at Ser-180 mediated by FAM20C slows down glycosylation at Thr-178 notably. As to expression, mainly expressed in the brain and thymus at low levels. In brain; preferentially expressed in the ventrolateral thalamic nucleus.

It is found in the secreted. Regulator of phosphate homeostasis. Inhibits renal tubular phosphate transport by reducing SLC34A1 levels. Acts directly on the parathyroid to decrease PTH secretion. Regulator of vitamin-D metabolism. Negatively regulates osteoblasts differentiation and matrix mineralization. Up-regulates EGR1 expression in the presence of KL. This is Fibroblast growth factor 23 (Fgf23) from Mus musculus (Mouse).